Consider the following 215-residue polypeptide: Vesicle-trafficking protein SEC22b-A (215 aa).

Topologically, residues 1-190 are cytoplasmic; sequence MVLQTMIVRV…RSDAKYLNTR (190 aa). Positions 6-119 constitute a Longin domain; sequence MIVRVADSLP…YSFIEFDTYI (114 aa). In terms of domain architecture, v-SNARE coiled-coil homology spans 134–194; sequence NLGNINSELH…KYLNTRSTYA (61 aa). The helical transmembrane segment at 191-213 threads the bilayer; that stretch reads STYAKVAAGAVIIITLIIYVRFW. Residues 214–215 lie on the Lumenal side of the membrane; that stretch reads WL.

This sequence belongs to the synaptobrevin family. In terms of assembly, component of 2 distinct SNARE complexes.

It localises to the endoplasmic reticulum membrane. Its subcellular location is the endoplasmic reticulum-Golgi intermediate compartment membrane. The protein resides in the golgi apparatus. It is found in the cis-Golgi network membrane. The protein localises to the trans-Golgi network membrane. It localises to the melanosome. SNARE involved in targeting and fusion of ER-derived transport vesicles with the Golgi complex as well as Golgi-derived retrograde transport vesicles with the ER. This chain is Vesicle-trafficking protein SEC22b-A, found in Danio rerio (Zebrafish).